We begin with the raw amino-acid sequence, 418 residues long: EPS I polysaccharide export inner membrane protein EpsF (418 aa).

10 helical membrane-spanning segments follow: residues 21-41 (VLVV…LPII), 45-65 (CAAI…LATA), 142-162 (PLLV…IAIY), 170-190 (YVVF…GSAI), 222-242 (AGTH…VLFL), 262-282 (LIVL…EFVM), 296-316 (SAWE…AWLL), 326-346 (MAFL…PAVG), 347-367 (ARLF…FFFA), and 377-397 (KTLA…IVSA).

It to S.marcescens SfuB.

The protein resides in the cell inner membrane. In terms of biological role, probably involved in polymerization and/or export of exopolysaccharide EPS I which functions as a virulence factor. May play a role in export of EPS I or its intermediates across the membranes. This Ralstonia nicotianae (strain ATCC BAA-1114 / GMI1000) (Ralstonia solanacearum) protein is EPS I polysaccharide export inner membrane protein EpsF (epsF).